The following is a 143-amino-acid chain: Large-conductance mechanosensitive channel (143 aa).

2 consecutive transmembrane segments (helical) span residues 10–30 (FAVK…GAFS) and 89–109 (GSFI…FLMV).

Belongs to the MscL family. In terms of assembly, homopentamer.

It is found in the cell inner membrane. Channel that opens in response to stretch forces in the membrane lipid bilayer. May participate in the regulation of osmotic pressure changes within the cell. The polypeptide is Large-conductance mechanosensitive channel (Burkholderia vietnamiensis (strain G4 / LMG 22486) (Burkholderia cepacia (strain R1808))).